The sequence spans 386 residues: Succinate--CoA ligase [ADP-forming] subunit beta (386 aa).

The ATP-grasp domain maps to 9–244; the sequence is KELLREFGVA…TTEEDPREVE (236 aa). Residues K46, 53–55, E99, S102, and E107 each bind ATP; that span reads GRG. The Mg(2+) site is built by N199 and D213. Substrate-binding positions include N264 and 321–323; that span reads GIM.

It belongs to the succinate/malate CoA ligase beta subunit family. Heterotetramer of two alpha and two beta subunits. The cofactor is Mg(2+).

The catalysed reaction is succinate + ATP + CoA = succinyl-CoA + ADP + phosphate. The enzyme catalyses GTP + succinate + CoA = succinyl-CoA + GDP + phosphate. It participates in carbohydrate metabolism; tricarboxylic acid cycle; succinate from succinyl-CoA (ligase route): step 1/1. Its function is as follows. Succinyl-CoA synthetase functions in the citric acid cycle (TCA), coupling the hydrolysis of succinyl-CoA to the synthesis of either ATP or GTP and thus represents the only step of substrate-level phosphorylation in the TCA. The beta subunit provides nucleotide specificity of the enzyme and binds the substrate succinate, while the binding sites for coenzyme A and phosphate are found in the alpha subunit. In Exiguobacterium sp. (strain ATCC BAA-1283 / AT1b), this protein is Succinate--CoA ligase [ADP-forming] subunit beta.